Here is a 334-residue protein sequence, read N- to C-terminus: Malate dehydrogenase, cytoplasmic (334 aa).

S2 bears the N-acetylserine mark. NAD(+)-binding positions include G11–A17 and D42. Residues R92 and R98 each contribute to the substrate site. N105 provides a ligand contact to NAD(+). K110 carries the N6-succinyllysine modification. Position 112 (Q112) interacts with NAD(+). N6-acetyllysine occurs at positions 118 and 121. NAD(+) is bound at residue V129–N131. Substrate contacts are provided by N131 and R162. The Proton acceptor role is filled by H187. K214 is subject to N6-succinyllysine. The residue at position 217 (S217) is a Phosphoserine. R230 bears the Omega-N-methylarginine mark. Position 241 is a phosphoserine (S241). An N6-acetyllysine; alternate modification is found at K298. K298 is modified (N6-succinyllysine; alternate). Phosphoserine is present on S309. An N6-succinyllysine modification is found at K318. Phosphoserine occurs at positions 332 and 333.

Belongs to the LDH/MDH superfamily. MDH type 2 family. As to quaternary structure, homodimer. Post-translationally, ISGylated. Acetylation at Lys-118 dramatically enhances enzymatic activity and promotes adipogenic differentiation.

The protein localises to the cytoplasm. Its subcellular location is the cytosol. The catalysed reaction is (S)-malate + NAD(+) = oxaloacetate + NADH + H(+). The enzyme catalyses (2R)-2-hydroxy-3-(4-hydroxyphenyl)propanoate + NAD(+) = 3-(4-hydroxyphenyl)pyruvate + NADH + H(+). It catalyses the reaction (S)-2-hydroxyglutarate + NAD(+) = 2-oxoglutarate + NADH + H(+). Its function is as follows. Catalyzes the reduction of aromatic alpha-keto acids in the presence of NADH. Plays essential roles in the malate-aspartate shuttle and the tricarboxylic acid cycle, important in mitochondrial NADH supply for oxidative phosphorylation. Catalyzes the reduction of 2-oxoglutarate to 2-hydroxyglutarate, leading to elevated reactive oxygen species (ROS). The sequence is that of Malate dehydrogenase, cytoplasmic from Homo sapiens (Human).